Reading from the N-terminus, the 24-residue chain is U1-poneritoxin-Ni2a (24 aa).

Belongs to the ponericin-L family. Expressed by the venom gland.

Its subcellular location is the secreted. Functionally, has a broad spectrum of activity against both Gram-positive and Gram-negative bacteria. Is inactive against yeast, erythrocytes, and insects. The chain is U1-poneritoxin-Ni2a from Neoponera inversa (Ant).